A 68-amino-acid polypeptide reads, in one-letter code: Protein transport protein Sec61 subunit gamma (68 aa).

Residues 1–32 (MDQIMQFVEPSRQFVKDSIRLVKRCTKPDRKE) are Cytoplasmic-facing. The chain crosses the membrane as a helical span at residues 33–61 (FQKIAMATAIGFAIMGFIGFFVKLIHIPI). The Extracellular segment spans residues 62–68 (NNIIVGG).

The protein belongs to the SecE/SEC61-gamma family. The SEC61 channel-forming translocon complex consists of channel-forming core components SEC61A1, SEC61B and SEC61G and different auxiliary components such as SEC62 and SEC63. The SEC61 channel associates with the multi-pass translocon (MPT) complex.

The protein resides in the endoplasmic reticulum membrane. In terms of biological role, component of SEC61 channel-forming translocon complex that mediates transport of signal peptide-containing precursor polypeptides across the endoplasmic reticulum (ER). Forms a ribosome receptor and a gated pore in the ER membrane, both functions required for cotranslational translocation of nascent polypeptides. The SEC61 channel is also involved in ER membrane insertion of transmembrane proteins: it mediates membrane insertion of the first few transmembrane segments of proteins, while insertion of subsequent transmembrane regions of multi-pass membrane proteins is mediated by the multi-pass translocon (MPT) complex. The sequence is that of Protein transport protein Sec61 subunit gamma (sec61g) from Gadus morhua (Atlantic cod).